We begin with the raw amino-acid sequence, 260 residues long: Cytosolic Fe-S cluster assembly factor Nubp2 homolog 1 (260 aa).

14 to 21 (GKGGVGKS) lines the ATP pocket. Positions 188 and 191 each coordinate [4Fe-4S] cluster.

It belongs to the Mrp/NBP35 ATP-binding proteins family. NUBP2/CFD1 subfamily. Heterotetramer of 2 Nubp1 and 2 Nubp2 chains. Requires [4Fe-4S] cluster as cofactor.

It localises to the cytoplasm. In terms of biological role, component of the cytosolic iron-sulfur (Fe/S) protein assembly (CIA) machinery. Required for maturation of extramitochondrial Fe-S proteins. The Nubp1-Nubp2 heterotetramer forms a Fe-S scaffold complex, mediating the de novo assembly of an Fe-S cluster and its transfer to target apoproteins. The sequence is that of Cytosolic Fe-S cluster assembly factor Nubp2 homolog 1 from Drosophila yakuba (Fruit fly).